The primary structure comprises 671 residues: Phosphoenolpyruvate carboxykinase (ATP) 1 (671 aa).

Low complexity predominate over residues 1 to 10; that stretch reads MSAGNGNATN. The interval 1–44 is disordered; sequence MSAGNGNATNGDGGFSFPKGPVMPKITTGAAKRGSGVCHDDSGP. Serine 2 is modified (N-acetylserine). Serine 62 is modified (phosphoserine). Threonine 66 is subject to Phosphothreonine. Residues 100 to 127 form a disordered region; sequence TRESGPKVVRGDPAEKKTDGSTTPAYAH. Positions 108 to 118 are enriched in basic and acidic residues; that stretch reads VRGDPAEKKTD. Arginine 189 is a substrate binding site. Positions 270 and 271 each coordinate Ca(2+). Residues tyrosine 328 and lysine 334 each contribute to the substrate site. ATP-binding positions include lysine 334, histidine 353, and 369–377; that span reads GLSGTGKTT. Mn(2+) contacts are provided by lysine 334 and histidine 353. Aspartate 390 serves as a coordination point for Mn(2+). Ca(2+) is bound at residue glycine 404. Residues glutamate 418, arginine 455, 574–575, isoleucine 575, and threonine 580 each bind ATP; that span reads RI. Arginine 455 is a substrate binding site.

It belongs to the phosphoenolpyruvate carboxykinase (ATP) family. Monomer. Mn(2+) serves as cofactor. As to expression, expressed in cotyledons, flowers, siliques, seeds, leaves, stems and roots. Localized in mid-veins.

It localises to the cytoplasm. It catalyses the reaction oxaloacetate + ATP = phosphoenolpyruvate + ADP + CO2. The protein operates within carbohydrate biosynthesis; gluconeogenesis. With respect to regulation, allosterically activated by calcium. It may represent the only case of a monomeric, allosteric enzyme. Functionally, involved in the gluconeogenesis. Catalyzes the conversion of oxaloacetate (OAA) to phosphoenolpyruvate (PEP) through direct phosphoryl transfer between the nucleoside triphosphate and OAA. The polypeptide is Phosphoenolpyruvate carboxykinase (ATP) 1 (Arabidopsis thaliana (Mouse-ear cress)).